We begin with the raw amino-acid sequence, 673 residues long: UvrABC system protein B (673 aa).

A Helicase ATP-binding domain is found at 26-183 (EGLEDGLAHQ…RRLAELQYAR (158 aa)). 39 to 46 (GVTGSGKT) contributes to the ATP binding site. The Beta-hairpin signature appears at 92–115 (YYDYYQPEAYVPSSDTFIEKDASV). The 167-residue stretch at 431–597 (QVDDLLSEIR…GLNKKVVDIL (167 aa)) folds into the Helicase C-terminal domain. Residues 608-627 (AKGRGKSRPIVEPDNVPMDM) are disordered. Residues 633–668 (QQKIHELEGLMMQHAQNLEFEEAAQIRDQLHLLREL) form the UVR domain.

Belongs to the UvrB family. In terms of assembly, forms a heterotetramer with UvrA during the search for lesions. Interacts with UvrC in an incision complex.

The protein resides in the cytoplasm. The UvrABC repair system catalyzes the recognition and processing of DNA lesions. A damage recognition complex composed of 2 UvrA and 2 UvrB subunits scans DNA for abnormalities. Upon binding of the UvrA(2)B(2) complex to a putative damaged site, the DNA wraps around one UvrB monomer. DNA wrap is dependent on ATP binding by UvrB and probably causes local melting of the DNA helix, facilitating insertion of UvrB beta-hairpin between the DNA strands. Then UvrB probes one DNA strand for the presence of a lesion. If a lesion is found the UvrA subunits dissociate and the UvrB-DNA preincision complex is formed. This complex is subsequently bound by UvrC and the second UvrB is released. If no lesion is found, the DNA wraps around the other UvrB subunit that will check the other stand for damage. This chain is UvrABC system protein B, found in Escherichia coli O81 (strain ED1a).